The chain runs to 31 residues: Ranatuerin-2PL (31 aa).

Cys23 and Cys29 form a disulfide bridge.

In terms of tissue distribution, expressed by the skin glands.

It is found in the secreted. In terms of biological role, antimicrobial activity against Gram-negative bacterium E.coli. This Lithobates palustris (Pickerel frog) protein is Ranatuerin-2PL.